We begin with the raw amino-acid sequence, 45 residues long: Photosystem I reaction center subunit IX 1 (45 aa).

The chain crosses the membrane as a helical span at residues 9 to 29 (WFRSAPVVATIWITLTAGIIV).

This sequence belongs to the PsaJ family.

It localises to the cellular thylakoid membrane. May help in the organization of the PsaE and PsaF subunits. The chain is Photosystem I reaction center subunit IX 1 from Prochlorococcus marinus (strain NATL1A).